We begin with the raw amino-acid sequence, 98 residues long: Citrate lyase acyl carrier protein (98 aa).

S14 bears the O-(phosphoribosyl dephospho-coenzyme A)serine mark.

This sequence belongs to the CitD family. As to quaternary structure, oligomer with a subunit composition of (alpha,beta,gamma)6.

It localises to the cytoplasm. Functionally, covalent carrier of the coenzyme of citrate lyase. The sequence is that of Citrate lyase acyl carrier protein from Vibrio cholerae serotype O1 (strain ATCC 39541 / Classical Ogawa 395 / O395).